A 228-amino-acid chain; its full sequence is Lipoprotein-releasing system ATP-binding protein LolD (228 aa).

Positions 5-228 (FALSAISKSF…SGTLQNYTDY (224 aa)) constitute an ABC transporter domain. ATP is bound at residue 40–47 (GPSGSGKS).

The protein belongs to the ABC transporter superfamily. Lipoprotein translocase (TC 3.A.1.125) family. The complex is composed of two ATP-binding proteins (LolD) and two transmembrane proteins (LolC and LolE).

It is found in the cell inner membrane. Its function is as follows. Part of the ABC transporter complex LolCDE involved in the translocation of mature outer membrane-directed lipoproteins, from the inner membrane to the periplasmic chaperone, LolA. Responsible for the formation of the LolA-lipoprotein complex in an ATP-dependent manner. The sequence is that of Lipoprotein-releasing system ATP-binding protein LolD from Ehrlichia ruminantium (strain Gardel).